We begin with the raw amino-acid sequence, 390 residues long: Sulfate adenylyltransferase (390 aa).

Belongs to the sulfate adenylyltransferase family.

It carries out the reaction sulfate + ATP + H(+) = adenosine 5'-phosphosulfate + diphosphate. It participates in sulfur metabolism; hydrogen sulfide biosynthesis; sulfite from sulfate: step 1/3. The chain is Sulfate adenylyltransferase (sat) from Synechocystis sp. (strain ATCC 27184 / PCC 6803 / Kazusa).